The primary structure comprises 217 residues: DNA-binding transcriptional activator DevR/DosR (217 aa).

In terms of domain architecture, Response regulatory spans 3-119 (KVFLVDDHEV…ELARAVKDVG (117 aa)). A 4-aspartylphosphate modification is found at Asp54. An HTH luxR-type domain is found at 143–208 (KQDPLSGLTD…QAAVFATELK (66 aa)). Residues 167-186 (NKQIADRMFLAEKTVKNYVS) constitute a DNA-binding region (H-T-H motif). Residues Thr198 and Thr205 each carry the phosphothreonine; by PknH modification.

Homodimer. Interacts with NarL. Phosphorylated on Asp-54 by both DevS (DosS) and DosT. Phosphorylated on Thr-198 and Thr-205 by PknH, which enhances DevR dimerization. Aspartate phosphorylation and threonine phosphorylation cooperatively enhance DevR binding to DNA.

Its subcellular location is the cytoplasm. The protein resides in the host cytoplasmic vesicle. It localises to the host phagosome. Functionally, member of the two-component regulatory system DevR/DevS (also called DosR/DosS) involved in onset of the dormancy response. Regulates an approximately 48-member regulon. When phosphorylated binds and activates the promoter of DevR regulon genes in response to hypoxia. The presence of target DNA increases stability of phospho-DevR in vitro. Activates its own transcription under hypoxic but not aerobic conditions, probably binds as a dimer to tandem binding sites within the devR and hspX promoters. Accepts a phosphate group from DevS (DosS) and from DosT. Does not regulate transcription of dosT. This is DNA-binding transcriptional activator DevR/DosR from Mycobacterium tuberculosis (strain ATCC 25618 / H37Rv).